We begin with the raw amino-acid sequence, 234 residues long: MSRLLPLLGSRTARSLRPGPAAAPRLPSWCCCGRGLLALGVPGGPRLLGTHPKKEPMEALNTAQGARDFIYSLHSTERSCLLKELHRFESIAIAQEKLEALPPTPGQLRYVFFHNAIPFVGFGFLDNAIMIVAGTQIELSIGIILGISTMAAAALGNLVSDLAGLGLAGYVEALASRLGLSIPDLTPKQVDMWQTRVSTHLGKAVGVTIGCILGMFPLIFFGGSEEDEKLETTN.

The N-terminal 55 residues, 1 to 55, are a transit peptide targeting the mitochondrion; the sequence is MSRLLPLLGSRTARSLRPGPAAAPRLPSWCCCGRGLLALGVPGGPRLLGTHPKKE. Residues 56-110 are Cytoplasmic-facing; that stretch reads PMEALNTAQGARDFIYSLHSTERSCLLKELHRFESIAIAQEKLEALPPTPGQLRY. Residues 111-131 form a helical membrane-spanning segment; it reads VFFHNAIPFVGFGFLDNAIMI. Residues 132-138 lie on the Extracellular side of the membrane; the sequence is VAGTQIE. The helical transmembrane segment at 139-159 threads the bilayer; it reads LSIGIILGISTMAAAALGNLV. Residues 160–203 are Cytoplasmic-facing; it reads SDLAGLGLAGYVEALASRLGLSIPDLTPKQVDMWQTRVSTHLGK. The chain crosses the membrane as a helical span at residues 204-224; the sequence is AVGVTIGCILGMFPLIFFGGS. Over 225–234 the chain is Extracellular; sequence EEDEKLETTN.

In terms of assembly, monomer. Homodimer. Interacts with GJA1. Interacts weakly with DSP. Interacts with SCN1B. As to expression, predominantly expressed in the ventricular tissue (at protein level).

Its subcellular location is the cell membrane. The protein localises to the mitochondrion inner membrane. Functionally, essential for maintaining proper cardiac intercalated disk (ICD) structure and function as well as cardiac conduction velocity in the heart. Its association with SCN1B is required for stabilizing the perinexus in the ICD and for localization of GJA1 and SCN5A to the ICD. May regulate the function of the gap junction protein GJA1 and may contribute to the stability and proper localization of GJA1 to cardiac intercalated disk thereby regulating gap junction communication. Regulates mitochondrial respiration and mitochondrial DNA copy number maintenance. In Mus musculus (Mouse), this protein is Transmembrane protein 65 (Tmem65).